The following is a 47-amino-acid chain: PhoP/PhoQ regulator MgrB (47 aa).

A helical membrane pass occupies residues 6–26 (WVLLIVIIAGCLLLWTQMLNV).

This sequence belongs to the MgrB family. May form homooligomers. Probably interacts with the periplasmic domain of PhoQ.

The protein localises to the cell inner membrane. Its function is as follows. PhoP-regulated transcription is redox-sensitive, being activated when the periplasm becomes more reducing. MgrB acts between DsbA/DsbB and PhoP/PhoQ in this pathway. Represses PhoP/PhoQ signaling, possibly by binding to the periplasmic domain of PhoQ, altering its activity and that of downstream effector PhoP. This Klebsiella pneumoniae (strain 342) protein is PhoP/PhoQ regulator MgrB.